A 157-amino-acid polypeptide reads, in one-letter code: Protein Smg (157 aa).

The protein belongs to the Smg family.

This Shigella boydii serotype 4 (strain Sb227) protein is Protein Smg.